A 633-amino-acid chain; its full sequence is Chitinase 2 (633 aa).

The GH18 domain maps to 151–602 (PKLSAYITDW…NAAREGLGYV (452 aa)). Residues 275–276 (QN) and 306–309 (GGWS) contribute to the chitin site. The active-site Proton donor is the E349. Residues Y350, 422 to 425 (MSYD), and W582 each bind chitin.

Belongs to the glycosyl hydrolase 18 family. As to quaternary structure, semipurified toxin complex consists of at least YenA1-YenA2-YenB-YenC1-YenC2-Chi1-Chi2. The Yen-TC:K9 subcomplex is about 26 nm tall and 22 nm in diameter with 5-fold symmetry and 5 copies of YenA1, YenA2, Chi1 and Chi2; the chitinase subunits may be solvent accessible on the exterior the complex. The Yen-TC:K9 subcomplex has no insecticidal activity. The native complex with additional YenB, YenC1 and YenC2 subunits is 16 nm taller and is insecticidal; the toxicity-conferring subunits are present at about 1 copy each.

It is found in the secreted. It catalyses the reaction Random endo-hydrolysis of N-acetyl-beta-D-glucosaminide (1-&gt;4)-beta-linkages in chitin and chitodextrins.. With respect to regulation, toxin complex is secreted when grown at 25 degrees Celsius or less; at higher temperatures the proteins are present intracellularly but not secreted. In terms of biological role, part of an orally active toxin complex (TC) with strong insecticidal effects on larvae of the Coleoptera Costelytra zealandica, Acrossidius tasmania and Adoryphorus couloni and some Lepidoptera larvae. The TC has an endochitinase activity. This subunit might aid infection by degradation of the larval peritrophic membrane. This Yersinia entomophaga protein is Chitinase 2.